A 3414-amino-acid chain; its full sequence is MAGKAVLKGKGGGPPRRASKVAPKKTRQLRVQMPNGLVLMRMLGVLWHALTGTARSPVLKAFWKVVPLKQATLALRKIKRTVSTLMVGLHRRGSRRTTIDWMTPLLITVMLGMCLTATVRRERDGSMVIRAEGRDAATQVRVENGTCVILATDMGSWCDDSLAYECVTIDQGEEPVDVDCFCRGVEKVTLEYGRCGRREGSRSRRSVLIPSHAQRDLTGRGHQWLEGEAVKAHLTRVEGWVWKNKLFTLSLVMVAWLMVDGLLPRILIVVVALALVPAYASRCTHLENRDFVTGVQGTTRLTLVLELGGCVTVTADGKPSLDVWLDSIYQESPAQTREYCLHAKLTGTKVAARCPTMGPATLPEEHQSGTVCKRDQSDRGWGNHCGLFGKGSIVTCVKFTCEDKKKATGHVYDVNKITYTIKVEPHTGEFVAANETHSGRKSASFTVSSEKTILTLGDYGDVSLLCRVASGVDLAQTVVLALDKTHEHLPTAWQVHRDWFNDLALPWKHDGAEAWNEAGRLVEFGTPHAVKMDVFNLGDQTGVLLKSLAGVPVASIEGTKYHLKSGHVTCEVGLEKLKMKGLTYTVCDKTKFTWKRAPTDSGHDTVVMEVGFSGTRPCRIPVRAVAHGVPEVNVAMLITPNPTMENNGGGFIEMQLPPGDNIIYVGDLNHQWFQKGSSIGRVLQKTRKGIERLTVLGEHAWDFGSVGGVMTSIGRAMHTVLGGAFNTLLGGVGFLPKILLGVAMAWLGLNMRNPTLSMGFLLSGGLVLAMTLGVGADVGCAVDTERMELRCGEGLVVWREVSEWYDNYVFHPETPAVLASAVQRAYEEEICGIVPQNRLEMAMWRSSLVELNLALAEGEANLTVVVDKADPSDYRGGVPGLLNKGKDIKVSWRSWGRSMLWSVPEAPRRFMIGVEGGRECPFARRKTGVMTVAEFGIGLRTKVFMDLRQELTTECDTGVMGAAVKNGMAVHTDQSLWMKSIKNDTTVTIVELIVTDLRNCTWPASHTIDNAGVVNSKLFLPASLAGPRSTYNVIPGYAEQVRGPWAHTPVRIKREECPGTRVTIDKACDKRGASVRSTTESGKVIPEWCCRTCELPPVTYRTGTDCWYAMEIRPVHTQGGLVRSMVVADNGALLSEGGVPGVVALFVVLELVIRRRPATGGTVIWGGIAILALLVTGLVSVESLFRYLVAVGLVFQLELGPEAVAMVLLQAVFEMRTCLLSGFVLRRSITTREIVTVYFLLLVLEMGIPVKGLEHLWRWTDALAMGAIIFRACTAEGKTGIGLLLAAFMTQSDMNIIHDGLTAFLCVATTMAIWRYIRGQGERKGLTWIVPLAGILGGEGSGVRLLAFWELAASRGRRSFNEPMTVIGVMLTLASGMMRHTSQEAVCAMALAAFLLLMLTLGTRKMQLLAEWSGNIEWNPELTSEGGEVSLRVRQDALGNLHLTELEKEERMMAFWLVVGLIASAFHWSGILIVMGLWTISEMLGSPRRTDLVFSGCSEGRSDSRPLDVKNGVYRIYTPGLLWGQRQIGVGYGAKGVLHTMWHVTRGAALLVDGVAVGPYWADVREDVVCYGGAWSLESRWRGETVQVHAFPPGRAHETHQCQPGELILENGRKMGAIPIDLAKGTSGSPIMNSQGEVVGLYGNGLKTNDTYVSSIAQGEVEKSRPNLPQSVVGTGWTAKGQITVLDMHPGSGKTHRVLPELIRQCVERRLRTLVLAPTRVVLREMERALSGKNVRFHSPAVTEQHANGAIVDVMCHATYVNRRLLPQGRQNWEVAIMDEAHWTDPHSIAARGHLYSLAKENRCAFVLMTATPPGKSEPFPESNGAIASEERQIPDGEWRDGFDWITEYEGRTAWFVPSIARGGAIARALRQRGKSVICLNSKTFDKEYSRVKDEKPDFVVTTDISEMGANLDVTRVIDGRTNIKPEEVDGRIELTGTRRVTTASAAQRRGRVGRQGGRTDEYIYSGQCDDDDSGLVQWKEAQILLDNITTARGPVATFYGPEQERMTETAGHYRLPEEKRKHFRHLLAQCDFTPWLAWHVAANVASVTDRSWTWEGPEENAVDENNGELVTFRSPNGAERTLRPVWRDARMFREGRDIREFVSYASGRRSVGDVLMGMSGVPALLRQRCTSAMDVFYTLMHEEPGSRAMRIGERDAPEAFLTAVEMLVLGLATLGVVWCFVVRTSVSRMVLGTLVLATSLIFLWAGGVGYGNMAGVALVFYTLLTVLQPETGKQRSSDDNKLAYFLLTLCGLAGMVAANEMGLLEKTKADLAALFARDQGETVRWGEWTNLDIQPARSWGTYVLVVSLFTPYMLHQLQTRIQQLVNSAVASGAQAMRDLGGGTPFFGVAGHVLALGVASLVGATPTSLILGVGLAAFHLAIVVSGLEAELTQRAHKVFFSAMVRNPMVDGDVINPFGDGEAKPALYERKLSLILALVLCLASVVMNRTFVAVTEAGAVGVAAAMQLLRPEMDVLWTMPVACGMSGVVRGSLWGLLPLGHRLWLRTTGTRRGGSEGDTLGDMWKARLNSCTKEEFFAYRRAGVMETDREKARELLKRGETNMGLAVSRGTSKLAWMEERGYVTLKGEVVDLGCGRGGWSYYAASRPAVMSVRAYTIGGKGHESPRMVTSLGWNLIKFRAGMDVFSMEPHRADAILCDIGESNPDAVVEGERSRRVILLMEQWKNRNPTATCVFKVLAPYRPEVIEALHRFQLQWGGGLVRTPFSRNSTHEMYFSTAITGNIVNSVNIQSRKLLARFGDQRGPTRVPEIDLGVGTRSVVLAEDKVKEKDVMERIQALKDQYCDTWHEDHEHPYRTWQYWGSYKTAATGSSASLLNGVVKLLSWPWNAREDVVRMAMTDTTAFGQQRVFKDKVDTKAQEPQPGTKIIMRAVNDWLLERLVKKSRPRMCSREEFIAKVRSNAALAAWSDEQNKWKSAREAVEDPEFWSLVEAERERHLQGRCAHCVYNMMGKREKKLGEFGVAKGSRAIWYMWLGSRFLEFEALGFLNEDHWASRASSGAGVEGISLNYLGWHLKKLASLSGGLFYADDTAGWDTRITNADLDDEEQILRYMDGDHKKLAATVLRKAYHAKVVRVARPSREGGCVMDIITRRDQRGSGQVVTYALNTITNIKVQLVRMMEGEGVIEVADSHNPRLLRVEKCVEEHGEERLSRMLVSGDDCVVRPVDDRFSKALYFLNDMAKTRKDTGEWEPSTGFASWEEVPFCSHHFHELVMKDGRALVVPCRDQDELVGRARVSPGCGWSVRETACLSKAYGQMWLLSYFHRRDLRTLGFAICSAVPVDWVPTGRTTWSIHASGAWMTTEDMLEVWNRVWIYDNPFMEDKTRVDEWRDTPYLPKSQDILCSSLVGRGERAEWAKNIWGAVEKVRRMIGPEHYRDYLSSMDRHDLHWELKLESSIF.

The interval 1-27 (MAGKAVLKGKGGGPPRRASKVAPKKTR) is disordered. At 1–98 (MAGKAVLKGK…LHRRGSRRTT (98 aa)) the chain is on the cytoplasmic side. Residues 17–27 (RASKVAPKKTR) are compositionally biased toward basic residues. The propeptide at 97–117 (TTIDWMTPLLITVMLGMCLTA) is ER anchor for the capsid protein C, removed in mature form by serine protease NS3. The chain crosses the membrane as a helical span at residues 99-117 (IDWMTPLLITVMLGMCLTA). The Extracellular segment spans residues 118-242 (TVRRERDGSM…HLTRVEGWVW (125 aa)). The N-linked (GlcNAc...) asparagine; by host glycan is linked to N144. A helical membrane pass occupies residues 243 to 260 (KNKLFTLSLVMVAWLMVD). G261 is a topological domain (cytoplasmic). A helical transmembrane segment spans residues 262-280 (LLPRILIVVVALALVPAYA). Topologically, residues 281 to 727 (SRCTHLENRD…HTVLGGAFNT (447 aa)) are extracellular. 6 disulfide bridges follow: C283-C310, C340-C396, C340-C401, C354-C385, C372-C396, and C372-C401. The tract at residues 378-391 (DRGWGNHCGLFGKG) is fusion peptide. N-linked (GlcNAc...) asparagine; by host glycosylation is present at N434. 2 disulfides stabilise this stretch: C466–C570 and C587–C618. The chain crosses the membrane as a helical span at residues 728–748 (LLGGVGFLPKILLGVAMAWLG). Residues 749-755 (LNMRNPT) lie on the Cytoplasmic side of the membrane. The helical transmembrane segment at 756–776 (LSMGFLLSGGLVLAMTLGVGA) threads the bilayer. Residues 777–1187 (DVGCAVDTER…LVSVESLFRY (411 aa)) lie on the Extracellular side of the membrane. Disulfide bonds link C780-C791, C831-C920, C955-C1000, C1057-C1106, C1068-C1090, and C1089-C1093. Residues N861, N983, and N999 are each glycosylated (N-linked (GlcNAc...) asparagine; by host). A helical membrane pass occupies residues 1188 to 1208 (LVAVGLVFQLELGPEAVAMVL). The Cytoplasmic segment spans residues 1209–1232 (LQAVFEMRTCLLSGFVLRRSITTR). A helical transmembrane segment spans residues 1233–1253 (EIVTVYFLLLVLEMGIPVKGL). Topologically, residues 1254 to 1267 (EHLWRWTDALAMGA) are lumenal. The helical transmembrane segment at 1268–1288 (IIFRACTAEGKTGIGLLLAAF) threads the bilayer. Topologically, residues 1289–1300 (MTQSDMNIIHDG) are cytoplasmic. A helical membrane pass occupies residues 1301–1319 (LTAFLCVATTMAIWRYIRG). The Lumenal portion of the chain corresponds to 1320–1325 (QGERKG). A helical membrane pass occupies residues 1326–1346 (LTWIVPLAGILGGEGSGVRLL). At 1347 to 1359 (AFWELAASRGRRS) the chain is on the cytoplasmic side. Residues 1360-1378 (FNEPMTVIGVMLTLASGMM) form a helical membrane-spanning segment. Residues 1379 to 1382 (RHTS) are Lumenal-facing. A helical membrane pass occupies residues 1383–1403 (QEAVCAMALAAFLLLMLTLGT). The Cytoplasmic portion of the chain corresponds to 1404-1454 (RKMQLLAEWSGNIEWNPELTSEGGEVSLRVRQDALGNLHLTELEKEERMMA). Residues 1410-1449 (AEWSGNIEWNPELTSEGGEVSLRVRQDALGNLHLTELEKE) form an interacts with and activates NS3 protease region. An intramembrane region (helical) is located at residues 1455–1475 (FWLVVGLIASAFHWSGILIVM). Residues 1476–2160 (GLWTISEMLG…RIGERDAPEA (685 aa)) are Cytoplasmic-facing. One can recognise a Peptidase S7 domain in the interval 1490–1669 (TDLVFSGCSE…EVEKSRPNLP (180 aa)). Active-site charge relay system; for serine protease NS3 activity residues include H1543, D1567, and S1627. The Helicase ATP-binding domain occupies 1675-1831 (TGWTAKGQIT…ESNGAIASEE (157 aa)). An ATP-binding site is contributed by 1688 to 1695 (MHPGSGKT). The short motif at 1779-1782 (DEAH) is the DEAH box element. The region spanning 1841 to 2000 (DGFDWITEYE…TARGPVATFY (160 aa)) is the Helicase C-terminal domain. K1883 bears the N6-acetyllysine; by host mark. A helical membrane pass occupies residues 2161 to 2181 (FLTAVEMLVLGLATLGVVWCF). Over 2182–2189 (VVRTSVSR) the chain is Lumenal. An intramembrane region (helical) is located at residues 2190-2209 (MVLGTLVLATSLIFLWAGGV). A topological domain (lumenal) is located at residue G2210. A helical membrane pass occupies residues 2211–2231 (YGNMAGVALVFYTLLTVLQPE). Over 2232-2238 (TGKQRSS) the chain is Cytoplasmic. A helical transmembrane segment spans residues 2239–2259 (DDNKLAYFLLTLCGLAGMVAA). Residues 2260–2296 (NEMGLLEKTKADLAALFARDQGETVRWGEWTNLDIQP) are Lumenal-facing. An intramembrane region (helical) is located at residues 2297 to 2315 (ARSWGTYVLVVSLFTPYML). At 2316-2343 (HQLQTRIQQLVNSAVASGAQAMRDLGGG) the chain is on the lumenal side. An intramembrane region (helical) is located at residues 2344–2364 (TPFFGVAGHVLALGVASLVGA). The Lumenal segment spans residues 2365–2368 (TPTS). The helical transmembrane segment at 2369 to 2389 (LILGVGLAAFHLAIVVSGLEA) threads the bilayer. The Cytoplasmic segment spans residues 2390–2432 (ELTQRAHKVFFSAMVRNPMVDGDVINPFGDGEAKPALYERKLS). A helical membrane pass occupies residues 2433 to 2453 (LILALVLCLASVVMNRTFVAV). Residues 2454–2477 (TEAGAVGVAAAMQLLRPEMDVLWT) lie on the Lumenal side of the membrane. The helical transmembrane segment at 2478–2498 (MPVACGMSGVVRGSLWGLLPL) threads the bilayer. At 2499–3414 (GHRLWLRTTG…WELKLESSIF (916 aa)) the chain is on the cytoplasmic side. The region spanning 2512 to 2776 (GGSEGDTLGD…EIDLGVGTRS (265 aa)) is the mRNA cap 0-1 NS5-type MT domain. S2567 lines the S-adenosyl-L-methionine pocket. At S2567 the chain carries Phosphoserine. K2572 acts as the For 2'-O-MTase activity in catalysis. Residues G2597, W2598, T2615, I2616, D2642, and V2643 each coordinate S-adenosyl-L-methionine. Residue D2657 is the For 2'-O-MTase activity of the active site. I2658 lines the S-adenosyl-L-methionine pocket. Active-site for 2'-O-MTase activity residues include K2694 and E2730. Residues 2730-2734 (EMYFS) form an interaction with host SCRIB region. Residue Y2732 coordinates S-adenosyl-L-methionine. Residues E2950, H2954, C2959, and C2962 each coordinate Zn(2+). The 150-residue stretch at 3040 to 3189 (GLFYADDTAG…RPVDDRFSKA (150 aa)) folds into the RdRp catalytic domain. Zn(2+) contacts are provided by H3224, C3240, and C3359.

The protein in the N-terminal section; belongs to the class I-like SAM-binding methyltransferase superfamily. mRNA cap 0-1 NS5-type methyltransferase family. As to quaternary structure, homodimer. Interacts (via N-terminus) with host EXOC1 (via C-terminus); this interaction results in EXOC1 degradation through the proteasome degradation pathway. In terms of assembly, forms heterodimers with envelope protein E in the endoplasmic reticulum and Golgi. Homodimer; in the endoplasmic reticulum and Golgi. Interacts with protein prM. Interacts with non-structural protein 1. As to quaternary structure, homodimer; Homohexamer when secreted. Interacts with envelope protein E. In terms of assembly, interacts (via N-terminus) with serine protease NS3. Forms a heterodimer with serine protease NS3. May form homooligomers. As to quaternary structure, forms a heterodimer with NS2B. Interacts with non-structural protein 2A (via N-terminus). Interacts with NS4B. Interacts with unphosphorylated RNA-directed RNA polymerase NS5; this interaction stimulates RNA-directed RNA polymerase NS5 guanylyltransferase activity. In terms of assembly, interacts with serine protease NS3. Interacts with NS1. Homodimer. Interacts with host STAT2; this interaction inhibits the phosphorylation of the latter, and, when all viral proteins are present (polyprotein), targets STAT2 for degradation. Interacts with serine protease NS3. Interacts with host SCRIB; this interaction targets NS5 to the cell membrane periphery and nucleus, thereby allowing efficient host nuclear STAT1 inhibition. Specific enzymatic cleavages in vivo yield mature proteins. Cleavages in the lumen of endoplasmic reticulum are performed by host signal peptidase, whereas cleavages in the cytoplasmic side are performed by serine protease NS3. Signal cleavage at the 2K-4B site requires a prior NS3 protease-mediated cleavage at the 4A-2K site. In terms of processing, cleaved in post-Golgi vesicles by a host furin, releasing the mature small envelope protein M, and peptide pr. This cleavage is incomplete as up to 30% of viral particles still carry uncleaved prM. Post-translationally, N-glycosylated. N-glycosylated. The excreted form is glycosylated and this is required for efficient secretion of the protein from infected cells. In terms of processing, acetylated by host KAT5. Acetylation modulates NS3 RNA-binding and unwinding activities and plays an important positive role for viral replication. Post-translationally, phosphorylated on serines residues. This phosphorylation may trigger NS5 nuclear localization.

The protein localises to the virion. Its subcellular location is the host nucleus. It is found in the host cytoplasm. The protein resides in the host perinuclear region. It localises to the secreted. The protein localises to the virion membrane. Its subcellular location is the host endoplasmic reticulum membrane. The enzyme catalyses Selective hydrolysis of -Xaa-Xaa-|-Yaa- bonds in which each of the Xaa can be either Arg or Lys and Yaa can be either Ser or Ala.. It catalyses the reaction RNA(n) + a ribonucleoside 5'-triphosphate = RNA(n+1) + diphosphate. It carries out the reaction a ribonucleoside 5'-triphosphate + H2O = a ribonucleoside 5'-diphosphate + phosphate + H(+). The catalysed reaction is ATP + H2O = ADP + phosphate + H(+). The enzyme catalyses a 5'-end (5'-triphosphoguanosine)-ribonucleoside in mRNA + S-adenosyl-L-methionine = a 5'-end (N(7)-methyl 5'-triphosphoguanosine)-ribonucleoside in mRNA + S-adenosyl-L-homocysteine. It catalyses the reaction a 5'-end (N(7)-methyl 5'-triphosphoguanosine)-ribonucleoside in mRNA + S-adenosyl-L-methionine = a 5'-end (N(7)-methyl 5'-triphosphoguanosine)-(2'-O-methyl-ribonucleoside) in mRNA + S-adenosyl-L-homocysteine + H(+). Its function is as follows. Plays a role in virus budding by binding to membrane and gathering the viral RNA into a nucleocapsid that forms the core of a mature virus particle. During virus entry, may induce genome penetration in host cytoplasm after hemifusion induced by surface proteins. Can migrate to the cell nucleus where it modulates host functions. In terms of biological role, inhibits RNA silencing by interfering with host Dicer. Prevents premature fusion activity of envelope proteins in trans-Golgi by binding to envelope protein E at pH6.0. After virion release in extracellular space gets dissociated from E dimers. Functionally, acts as a chaperone for envelope protein E during intracellular virion assembly by masking and inactivating envelope protein E fusion peptide. prM is the only viral peptide matured by host furin in the trans-Golgi network. Presumably to avoid catastrophic activation of the viral fusion activity in acidic GolGi compartment prior to virion release. prM-E cleavage is ineficient, and many virions are only partially matured. These uncleaved prM would play a role in immune evasion. Its function is as follows. May play a role in virus budding. Exerts cytotoxic effects by activating a mitochondrial apoptotic pathway through M extodomain. May display a viroporin activity. In terms of biological role, binds to host cell surface receptor and mediates fusion between viral and cellular membranes. Envelope protein is synthesized in the endoplasmic reticulum in the form of heterodimer with protein prM. They play a role in virion budding in the ER, and the newly formed immature particle is covered with 60 spikes composed of heterodimer between precursor prM and envelope protein E. The virion is transported to the Golgi apparatus where the low pH causes dissociation of PrM-E heterodimers and formation of E homodimers. prM-E cleavage is ineficient, and many virions are only partially matured. These uncleaved prM would play a role in immune evasion. Involved in immune evasion, pathogenesis and viral replication. Once cleaved off the polyprotein, is targeted to three destinations: the viral replication cycle, the plasma membrane and the extracellular compartment. Essential for viral replication. Required for formation of the replication complex and recruitment of other non-structural proteins to the ER-derived membrane structures. Excreted as a hexameric lipoparticle that plays a role against host immune response. Antagonizing the complement function. Binds to the host macrophages and dendritic cells. Inhibits signal transduction originating from Toll-like receptor 3 (TLR3). Functionally, component of the viral RNA replication complex that functions in virion assembly and antagonizes the host immune response. Its function is as follows. Required cofactor for the serine protease function of NS3. May have membrane-destabilizing activity and form viroporins. In terms of biological role, displays three enzymatic activities: serine protease, NTPase and RNA helicase. NS3 serine protease, in association with NS2B, performs its autocleavage and cleaves the polyprotein at dibasic sites in the cytoplasm: C-prM, NS2A-NS2B, NS2B-NS3, NS3-NS4A, NS4A-2K and NS4B-NS5. NS3 RNA helicase binds RNA and unwinds dsRNA in the 3' to 5' direction. Regulates the ATPase activity of the NS3 helicase activity. NS4A allows NS3 helicase to conserve energy during unwinding. Functionally, functions as a signal peptide for NS4B and is required for the interferon antagonism activity of the latter. Its function is as follows. Induces the formation of ER-derived membrane vesicles where the viral replication takes place. Inhibits interferon (IFN)-induced host STAT1 phosphorylation and nuclear translocation, thereby preventing the establishment of cellular antiviral state by blocking the IFN-alpha/beta pathway. Inhibits STAT2 translocation in the nucleus after IFN-alpha treatment. In terms of biological role, replicates the viral (+) and (-) genome, and performs the capping of genomes in the cytoplasm. NS5 methylates viral RNA cap at guanine N-7 and ribose 2'-O positions. Besides its role in genome replication, also prevents the establishment of cellular antiviral state by blocking the interferon-alpha/beta (IFN-alpha/beta) signaling pathway. Inhibits host TYK2 and STAT2 phosphorylation, thereby preventing activation of JAK-STAT signaling pathway. In Homo sapiens (Human), this protein is Genome polyprotein.